The chain runs to 99 residues: Malonate decarboxylase acyl carrier protein (99 aa).

Residue S25 is modified to O-(phosphoribosyl dephospho-coenzyme A)serine.

Belongs to the MdcC family. Post-translationally, covalently binds the prosthetic group of malonate decarboxylase.

It is found in the cytoplasm. Its function is as follows. Subunit of malonate decarboxylase, it is an acyl carrier protein to which acetyl and malonyl thioester residues are bound via a 2'-(5''-phosphoribosyl)-3'-dephospho-CoA prosthetic group and turn over during the catalytic mechanism. This Pseudomonas syringae pv. tomato (strain ATCC BAA-871 / DC3000) protein is Malonate decarboxylase acyl carrier protein.